Reading from the N-terminus, the 335-residue chain is uncharacterized protein (335 aa).

This is an uncharacterized protein from Schizosaccharomyces pombe (strain 972 / ATCC 24843) (Fission yeast).